Reading from the N-terminus, the 847-residue chain is uncharacterized protein (847 aa).

This is an uncharacterized protein from Penicillium chrysogenum virus (isolate Caston/2003) (PcV).